The sequence spans 296 residues: Tyrosine recombinase XerC (296 aa).

The Core-binding (CB) domain occupies 1 to 84; the sequence is MEKIQQAYLY…TLRSFYEYWM (84 aa). The Tyr recombinase domain maps to 105 to 286; sequence YLPHFFYEEE…TNEQLRKVYL (182 aa). Residues Arg-145, Lys-169, His-238, Arg-241, and His-264 contribute to the active site. Tyr-273 serves as the catalytic O-(3'-phospho-DNA)-tyrosine intermediate.

This sequence belongs to the 'phage' integrase family. XerC subfamily. In terms of assembly, forms a cyclic heterotetrameric complex composed of two molecules of XerC and two molecules of XerD.

It localises to the cytoplasm. Its function is as follows. Site-specific tyrosine recombinase, which acts by catalyzing the cutting and rejoining of the recombining DNA molecules. The XerC-XerD complex is essential to convert dimers of the bacterial chromosome into monomers to permit their segregation at cell division. It also contributes to the segregational stability of plasmids. The sequence is that of Tyrosine recombinase XerC from Staphylococcus saprophyticus subsp. saprophyticus (strain ATCC 15305 / DSM 20229 / NCIMB 8711 / NCTC 7292 / S-41).